Consider the following 133-residue polypeptide: Ubiquitin-like FUBI-ribosomal protein eS30 fusion protein (133 aa).

The tract at residues 84-110 is disordered; sequence GKVRGQTPKVAKQEKKKKKTGRAKRRM. Residues 97 to 110 are compositionally biased toward basic residues; the sequence is EKKKKKTGRAKRRM. Position 125 is an N6-succinyllysine (Lys125).

In the N-terminal section; belongs to the ubiquitin family. This sequence in the C-terminal section; belongs to the eukaryotic ribosomal protein eS30 family. In terms of assembly, component of the 40S subunit of the ribosome. In terms of processing, FUBI is cleaved from ribosomal protein S30 by the deubiquitinase USP36 before the assembly of ribosomal protein S30 into pre-40S ribosomal particles. FUBI removal from ribosomal protein S30 is a crucial event for the final maturation of pre-40S particles.

It localises to the nucleus. The protein localises to the cytoplasm. May have pro-apoptotic activity. Its function is as follows. Component of the 40S subunit of the ribosome. Contributes to the assembly and function of 40S ribosomal subunits. In Mus musculus (Mouse), this protein is Ubiquitin-like FUBI-ribosomal protein eS30 fusion protein (Fau).